A 219-amino-acid polypeptide reads, in one-letter code: Elongation factor Ts (219 aa).

Positions 82 to 85 (TDFV) are involved in Mg(2+) ion dislocation from EF-Tu.

The protein belongs to the EF-Ts family.

It localises to the cytoplasm. Functionally, associates with the EF-Tu.GDP complex and induces the exchange of GDP to GTP. It remains bound to the aminoacyl-tRNA.EF-Tu.GTP complex up to the GTP hydrolysis stage on the ribosome. The sequence is that of Elongation factor Ts from Anaeromyxobacter dehalogenans (strain 2CP-C).